A 389-amino-acid chain; its full sequence is Diaminopimelate decarboxylase (389 aa).

Residue lysine 58 is modified to N6-(pyridoxal phosphate)lysine. Residues glycine 233 and 271 to 274 each bind pyridoxal 5'-phosphate; that span reads ELGR. 5 residues coordinate substrate: arginine 274, arginine 310, tyrosine 314, glutamate 342, and tyrosine 370. Tyrosine 370 lines the pyridoxal 5'-phosphate pocket.

Belongs to the Orn/Lys/Arg decarboxylase class-II family. LysA subfamily. As to quaternary structure, homodimer. Requires pyridoxal 5'-phosphate as cofactor.

The catalysed reaction is meso-2,6-diaminopimelate + H(+) = L-lysine + CO2. The protein operates within amino-acid biosynthesis; L-lysine biosynthesis via DAP pathway; L-lysine from DL-2,6-diaminopimelate: step 1/1. Its function is as follows. Specifically catalyzes the decarboxylation of meso-diaminopimelate (meso-DAP) to L-lysine. This Francisella tularensis subsp. holarctica (strain LVS) protein is Diaminopimelate decarboxylase.